The sequence spans 785 residues: Semaphorin-3F (785 aa).

The first 18 residues, 1–18, serve as a signal peptide directing secretion; sequence MLVAGLLLWASLLTGAWP. Residues 31–545 enclose the Sema domain; sequence RVRLSFKELK…SAVGVTHLSL (515 aa). An N-linked (GlcNAc...) asparagine glycan is attached at N53. A disulfide bridge connects residues C104 and C115. N-linked (GlcNAc...) asparagine glycosylation is present at N126. Disulfide bonds link C133–C142, C300–C412, C324–C372, C548–C566, and C678–C746. The Ig-like C2-type domain maps to 605–690; it reads ANKNAVESVQ…TENNFKHVVT (86 aa). Residues 752 to 785 are disordered; the sequence is HVPPSPREAPGAPRSPEPQDQKKPRNRRHHPPDT. Residues 775–785 show a composition bias toward basic residues; that stretch reads PRNRRHHPPDT.

This sequence belongs to the semaphorin family. As to expression, expressed abundantly but differentially in a variety of neural and nonneural tissues. There is high expression in mammary gland, kidney, fetal brain, and lung and lower expression in heart and liver.

The protein localises to the secreted. Functionally, may play a role in cell motility and cell adhesion. This chain is Semaphorin-3F (SEMA3F), found in Homo sapiens (Human).